We begin with the raw amino-acid sequence, 202 residues long: Large ribosomal subunit protein bL25 (202 aa).

The interval 1–21 is disordered; the sequence is MSKESYELKAEARERVGKGSS.

It belongs to the bacterial ribosomal protein bL25 family. CTC subfamily. In terms of assembly, part of the 50S ribosomal subunit; part of the 5S rRNA/L5/L18/L25 subcomplex. Contacts the 5S rRNA. Binds to the 5S rRNA independently of L5 and L18.

This is one of the proteins that binds to the 5S RNA in the ribosome where it forms part of the central protuberance. The polypeptide is Large ribosomal subunit protein bL25 (Agrobacterium fabrum (strain C58 / ATCC 33970) (Agrobacterium tumefaciens (strain C58))).